The sequence spans 261 residues: MIVSEPLLRVENLSKTYPNGVQALKNINLEVHPGEFLVVIGLSGSGKSTLLRCLNRLQEPTSGNIYFSGQEIGQVQDAEKIRSVRSKMAMIFQHFNLIPRQSVLKNVLMGRLAAKSTWQSLWGMFSDAERIEAKENLRLVGIAEKASLRADQLSGGQKQRVAIARALMQKPVLLLADEPVSSLDPATCHVVMDYLRRINQEMGITVIANLHFLSLVRKYATRVVALKDGEIVFRGKPEEITEEWFRRIYGEGAQDVAPNDI.

The ABC transporter domain maps to 8-253 (LRVENLSKTY…WFRRIYGEGA (246 aa)). 41 to 48 (GLSGSGKS) provides a ligand contact to ATP.

It belongs to the ABC transporter superfamily. Phosphonates importer (TC 3.A.1.9.1) family. The complex is composed of two ATP-binding proteins (PhnC), two transmembrane proteins (PhnE) and a solute-binding protein (PhnD).

Its subcellular location is the cell inner membrane. The catalysed reaction is phosphonate(out) + ATP + H2O = phosphonate(in) + ADP + phosphate + H(+). Its function is as follows. Part of the ABC transporter complex PhnCDE involved in phosphonates import. Responsible for energy coupling to the transport system. This is Phosphonates import ATP-binding protein PhnC from Bdellovibrio bacteriovorus (strain ATCC 15356 / DSM 50701 / NCIMB 9529 / HD100).